Consider the following 422-residue polypeptide: Elongation factor 1-alpha (422 aa).

The tr-type G domain maps to Lys5 to Ser221. The segment at Gly14–Ser21 is G1. GTP is bound at residue Gly14 to Ser21. Ser21 lines the Mg(2+) pocket. Residues Gly70–Asp74 are G2. Residues Asp91–Gly94 are G3. Residues Asp91–His95 and Asn146–Asp149 each bind GTP. The G4 stretch occupies residues Asn146–Asp149. The interval Ser185 to Phe187 is G5.

This sequence belongs to the TRAFAC class translation factor GTPase superfamily. Classic translation factor GTPase family. EF-Tu/EF-1A subfamily.

The protein resides in the cytoplasm. The catalysed reaction is GTP + H2O = GDP + phosphate + H(+). Its function is as follows. GTP hydrolase that promotes the GTP-dependent binding of aminoacyl-tRNA to the A-site of ribosomes during protein biosynthesis. The polypeptide is Elongation factor 1-alpha (Methanosarcina barkeri (strain Fusaro / DSM 804)).